A 242-amino-acid polypeptide reads, in one-letter code: Zinc-finger homeodomain protein 11 (242 aa).

A ZF-HD dimerization-type; degenerate zinc finger spans residues 31-82 (YKECLKNHAANLGGHALDGCGEFMPSPTATSTDPSSLRCAACGCHRNFHRRD). 2 disordered regions span residues 83–109 (PSEN…SRHV) and 135–161 (PGPS…RTRT). The segment at residues 156-213 (RKRTRTKFTPEQKIKMRAFAEKAGWKINGCDEKSVREFCNEVGIERGVLKVWMHNNKY) is a DNA-binding region (homeobox; atypical).

As to quaternary structure, homo- and heterodimer with other ZFHD proteins. Interacts with HIPP20, HIPP21, HIPP22, HIPP23, HIPP24, HIPP26, HIPP27, HIPP30 and MED25 (via ACID domain). Interacts with NAC019, NAC055 and NAC072 (via NAC binding domain). Binds to ZHD1, ZHD2, ZHD3, ZHD4, ZHD5, ZHD6, ZHD7, ZHD8, ZHD9, ZHD12, ZHD13 and ZHD14. In terms of tissue distribution, expressed in roots, inflorescences, open flowers and seeds. Detected in stems and seedlings.

It is found in the nucleus. In terms of biological role, transcription factor involved in the up-regulation of several stress-inducible genes. Acts as a transcriptional activator by interacting with MED25 and NAC proteins. Involved in increased drought tolerance. The protein is Zinc-finger homeodomain protein 11 (ZHD11) of Arabidopsis thaliana (Mouse-ear cress).